Reading from the N-terminus, the 503-residue chain is Zinc finger and BTB domain-containing protein 37 (503 aa).

One can recognise a BTB domain in the interval 32–96 (CDIVVNVQGQ…CYTGRICLQL (65 aa)). 2 disordered regions span residues 140–206 (QTRT…SDVE) and 280–344 (GHGS…QVEE). The span at 144–154 (KHQERPPESHR) shows a compositional bias: basic and acidic residues. The span at 155-167 (VTPNLNRSLSPRH) shows a compositional bias: polar residues. Residues 319–336 (TERHRARSESPGRMDEPK) are compositionally biased toward basic and acidic residues. 3 C2H2-type zinc fingers span residues 373–395 (LTCI…MRLH), 401–423 (FVCR…IRKH), and 429–452 (FHCH…RKNH). Residues 457–503 (PLEGPHSISPETTVTSRGQAEEESPSQEETVAPGEAVQGSVSTTGPD) are disordered. The span at 465-474 (SPETTVTSRG) shows a compositional bias: polar residues.

The protein localises to the nucleus. May be involved in transcriptional regulation. The sequence is that of Zinc finger and BTB domain-containing protein 37 (ZBTB37) from Homo sapiens (Human).